The following is a 225-amino-acid chain: Ribonuclease 3 (225 aa).

An RNase III domain is found at 7–129 (IPRLCRTLGY…IIGAIYLDSD (123 aa)). Mg(2+) is bound at residue glutamate 42. The active site involves aspartate 46. 2 residues coordinate Mg(2+): aspartate 115 and glutamate 118. Glutamate 118 is an active-site residue. The DRBM domain maps to 155 to 225 (DPKTLLQEHL…AAQVLELIKK (71 aa)).

It belongs to the ribonuclease III family. Homodimer. The cofactor is Mg(2+).

The protein resides in the cytoplasm. It catalyses the reaction Endonucleolytic cleavage to 5'-phosphomonoester.. In terms of biological role, digests double-stranded RNA. Involved in the processing of primary rRNA transcript to yield the immediate precursors to the large and small rRNAs (23S and 16S). Processes some mRNAs, and tRNAs when they are encoded in the rRNA operon. Processes pre-crRNA and tracrRNA of type II CRISPR loci if present in the organism. The protein is Ribonuclease 3 of Shewanella piezotolerans (strain WP3 / JCM 13877).